The sequence spans 332 residues: ATP-dependent (S)-NAD(P)H-hydrate dehydratase (332 aa).

In terms of domain architecture, YjeF C-terminal spans 46-326 (LLERARNIVP…EQIHNVFDDI (281 aa)). Residues glycine 146 and 199-205 (NAIEFCR) each bind (6S)-NADPHX. ATP is bound by residues 230–234 (KGLND) and 251–260 (GSGRRCGGQG). Aspartate 261 lines the (6S)-NADPHX pocket.

The protein belongs to the NnrD/CARKD family. Mg(2+) serves as cofactor.

It catalyses the reaction (6S)-NADHX + ATP = ADP + phosphate + NADH + H(+). The enzyme catalyses (6S)-NADPHX + ATP = ADP + phosphate + NADPH + H(+). In terms of biological role, catalyzes the dehydration of the S-form of NAD(P)HX at the expense of ATP, which is converted to ADP. Together with NAD(P)HX epimerase, which catalyzes the epimerization of the S- and R-forms, the enzyme allows the repair of both epimers of NAD(P)HX, a damaged form of NAD(P)H that is a result of enzymatic or heat-dependent hydration. The polypeptide is ATP-dependent (S)-NAD(P)H-hydrate dehydratase (Aedes aegypti (Yellowfever mosquito)).